Reading from the N-terminus, the 2243-residue chain is Zinc finger FYVE domain-containing protein 26 homolog (2243 aa).

Disordered stretches follow at residues 386–416 (SQRK…RPTA) and 514–556 (KKKA…GKAS). Residues 393–408 (GENDEEDDEQYVDDDV) show a composition bias toward acidic residues. Tyr403 bears the Phosphotyrosine mark. Residues 517-528 (ASSDDESRERSN) show a composition bias toward basic and acidic residues. Basic residues predominate over residues 534 to 543 (NRRKARRQRR). An LRR 1 repeat occupies 617-644 (KKIIETFHLEHSQLNRELHFMEQQQLVK). Ser1424 is subject to Phosphoserine. The FYVE-type zinc finger occupies 1444–1500 (DEEASHCMCCRRAAFTMLMRRHHCRRCGRVVCYACSTHRIRIPELYDELEVRICNDC). Zn(2+) is bound by residues Cys1450, Cys1453, Cys1467, Cys1470, Cys1475, Cys1478, Cys1497, and Cys1500. Positions 1505–1534 (TPAKDQGDGTSSERSAISGQVSKSSGRSDS) are disordered. Residues 1512-1534 (DGTSSERSAISGQVSKSSGRSDS) show a composition bias toward polar residues. The LRR 2 repeat unit spans residues 1887–1912 (YPQLANGGLNVLMDELQQLDDAQFTA).

It belongs to the ZFYVE26 family.

Its function is as follows. Phosphatidylinositol 3-phosphate (PtdIns[3]P)-binding protein. Involved in autophagy. The protein is Zinc finger FYVE domain-containing protein 26 homolog of Drosophila melanogaster (Fruit fly).